Here is a 133-residue protein sequence, read N- to C-terminus: CDGSH iron-sulfur domain-containing protein 2 homolog (133 aa).

Residues 1-35 lie on the Lumenal side of the membrane; that stretch reads MEPISHLVKSSLPNYLSSLPIPDSIGGWFKLSFKD. A helical transmembrane segment spans residues 36 to 58; the sequence is WLALIPPTVVVAGLGYTAYLAYC. The Cytoplasmic portion of the chain corresponds to 59–133; it reads PAAQGSCSAK…DNVGPIVIKK (75 aa). Residues cysteine 100, cysteine 102, cysteine 111, and histidine 115 each coordinate [2Fe-2S] cluster.

The protein belongs to the CISD protein family. CISD2 subfamily. The cofactor is [2Fe-2S] cluster.

It localises to the endoplasmic reticulum membrane. The sequence is that of CDGSH iron-sulfur domain-containing protein 2 homolog from Drosophila erecta (Fruit fly).